Consider the following 357-residue polypeptide: UDP-N-acetylglucosamine--N-acetylmuramyl-(pentapeptide) pyrophosphoryl-undecaprenol N-acetylglucosamine transferase (357 aa).

Residues 13–15 (TGG), Asn125, Arg161, Ser189, Ile243, and Gln288 each bind UDP-N-acetyl-alpha-D-glucosamine.

It belongs to the glycosyltransferase 28 family. MurG subfamily.

It is found in the cell inner membrane. The catalysed reaction is di-trans,octa-cis-undecaprenyl diphospho-N-acetyl-alpha-D-muramoyl-L-alanyl-D-glutamyl-meso-2,6-diaminopimeloyl-D-alanyl-D-alanine + UDP-N-acetyl-alpha-D-glucosamine = di-trans,octa-cis-undecaprenyl diphospho-[N-acetyl-alpha-D-glucosaminyl-(1-&gt;4)]-N-acetyl-alpha-D-muramoyl-L-alanyl-D-glutamyl-meso-2,6-diaminopimeloyl-D-alanyl-D-alanine + UDP + H(+). It participates in cell wall biogenesis; peptidoglycan biosynthesis. In terms of biological role, cell wall formation. Catalyzes the transfer of a GlcNAc subunit on undecaprenyl-pyrophosphoryl-MurNAc-pentapeptide (lipid intermediate I) to form undecaprenyl-pyrophosphoryl-MurNAc-(pentapeptide)GlcNAc (lipid intermediate II). This chain is UDP-N-acetylglucosamine--N-acetylmuramyl-(pentapeptide) pyrophosphoryl-undecaprenol N-acetylglucosamine transferase, found in Bordetella petrii (strain ATCC BAA-461 / DSM 12804 / CCUG 43448).